The following is a 432-amino-acid chain: Lipid-A-disaccharide synthase (432 aa).

Residues 1-11 (MTGIGNQTSGI) show a composition bias toward polar residues. A disordered region spans residues 1–35 (MTGIGNQTSGIETGVHDRAPADGEPTALPISHSPL).

The protein belongs to the LpxB family.

The enzyme catalyses a lipid X + a UDP-2-N,3-O-bis[(3R)-3-hydroxyacyl]-alpha-D-glucosamine = a lipid A disaccharide + UDP + H(+). It participates in bacterial outer membrane biogenesis; LPS lipid A biosynthesis. In terms of biological role, condensation of UDP-2,3-diacylglucosamine and 2,3-diacylglucosamine-1-phosphate to form lipid A disaccharide, a precursor of lipid A, a phosphorylated glycolipid that anchors the lipopolysaccharide to the outer membrane of the cell. The sequence is that of Lipid-A-disaccharide synthase from Xanthomonas oryzae pv. oryzae (strain MAFF 311018).